The chain runs to 578 residues: XK-related protein 6 (578 aa).

A run of 7 helical transmembrane segments spans residues Trp86 to Val106, Phe114 to Leu134, Trp253 to Tyr273, Val307 to Leu327, Trp348 to Val368, Met377 to Ala397, and Leu410 to Tyr430.

It belongs to the XK family.

It is found in the cell membrane. This chain is XK-related protein 6 (xkr6), found in Tetraodon nigroviridis (Spotted green pufferfish).